The primary structure comprises 229 residues: Peptidase E (229 aa).

Active-site charge relay system residues include Ser120, Asp135, and His157.

The protein belongs to the peptidase S51 family.

Its subcellular location is the cytoplasm. The enzyme catalyses Dipeptidase E catalyzes the hydrolysis of dipeptides Asp-|-Xaa. It does not act on peptides with N-terminal Glu, Asn or Gln, nor does it cleave isoaspartyl peptides.. In terms of biological role, hydrolyzes dipeptides containing N-terminal aspartate residues. May play a role in allowing the cell to use peptide aspartate to spare carbon otherwise required for the synthesis of the aspartate family of amino acids. This is Peptidase E from Salmonella arizonae (strain ATCC BAA-731 / CDC346-86 / RSK2980).